Consider the following 260-residue polypeptide: MLEKVKNIIVVLSGKGGVGKSTVSTQLSLALRKNGFKVGLLDIDLCGPSVPYLLGLEGRDIFQCDEGWVPVYTDESQTLAVMSIGFLLKNREDPVIWRGPKKTMMIRQFLTDVRWDELDYLIIDTPPGTSDEHITVMECLKEVGCHGAIIVTTPQEVALDDVRKEITFCKKTGINILGIVENMSGFVCPHCTSCTNIFSSNGGASLANYAQVPHLGTLPIDPRVGVLAGSTTSVLDELPDSTTAEVLTHIVEKLKTIFVS.

Residue 14-21 (GKGGVGKS) coordinates ATP. [4Fe-4S] cluster is bound by residues cysteine 188 and cysteine 191.

The protein belongs to the Mrp/NBP35 ATP-binding proteins family. NUBP2/CFD1 subfamily. In terms of assembly, heterotetramer of 2 Nubp1 and 2 Nubp2 chains. [4Fe-4S] cluster serves as cofactor.

Its subcellular location is the cytoplasm. Its function is as follows. Component of the cytosolic iron-sulfur (Fe/S) protein assembly (CIA) machinery. Required for maturation of extramitochondrial Fe-S proteins. The Nubp1-Nubp2 heterotetramer forms a Fe-S scaffold complex, mediating the de novo assembly of an Fe-S cluster and its transfer to target apoproteins. The protein is Cytosolic Fe-S cluster assembly factor Nubp2 homolog 1 of Drosophila yakuba (Fruit fly).